The primary structure comprises 131 residues: Peptidyl-prolyl cis-trans isomerase NIMA-interacting 4 (131 aa).

Residues Met1–Asp25 form a necessary for nuclear localization and DNA-binding region. Positions Met1–Lys39 are disordered. The segment at Met1–Arg41 is necessary for association with the pre-rRNP complexes. Residues Ser7–Ala18 are compositionally biased toward gly residues. Ser19 is subject to Phosphoserine; by CK2. In terms of domain architecture, PpiC spans Gly35–Gly129.

The protein belongs to the PpiC/parvulin rotamase family. PIN4 subfamily. As to quaternary structure, found in pre-ribosomal ribonucleoprotein (pre-rRNP) complexes. Phosphorylated. Phosphorylation occurs both in the nucleus and the cytoplasm. Phosphorylation at Ser-19 does not affect its PPIase activity but is required for nuclear localization, and the dephosphorylation is a prerequisite for the binding to DNA. The unphosphorylated form associates with the pre-rRNP complexes in the nucleus.

It is found in the nucleus. The protein localises to the nucleolus. Its subcellular location is the cytoplasm. It localises to the cytoskeleton. The protein resides in the spindle. It catalyses the reaction [protein]-peptidylproline (omega=180) = [protein]-peptidylproline (omega=0). Involved as a ribosomal RNA processing factor in ribosome biogenesis. Binds to tightly bent AT-rich stretches of double-stranded DNA. This chain is Peptidyl-prolyl cis-trans isomerase NIMA-interacting 4 (Pin4), found in Mus musculus (Mouse).